The following is an 896-amino-acid chain: Alanine--tRNA ligase (896 aa).

Zn(2+) contacts are provided by H574, H578, C677, and H681.

It belongs to the class-II aminoacyl-tRNA synthetase family. Requires Zn(2+) as cofactor.

Its subcellular location is the cytoplasm. The catalysed reaction is tRNA(Ala) + L-alanine + ATP = L-alanyl-tRNA(Ala) + AMP + diphosphate. In terms of biological role, catalyzes the attachment of alanine to tRNA(Ala) in a two-step reaction: alanine is first activated by ATP to form Ala-AMP and then transferred to the acceptor end of tRNA(Ala). Also edits incorrectly charged Ser-tRNA(Ala) and Gly-tRNA(Ala) via its editing domain. The polypeptide is Alanine--tRNA ligase (Mycoplasma capricolum subsp. capricolum (strain California kid / ATCC 27343 / NCTC 10154)).